Consider the following 393-residue polypeptide: MGLILRWKEKKQLSSKQNAQKSRKPANTSFRQQRLKAWQPILSPQSVLPLLILMACVFAPIGIGLVVSTISVQRLVVNYTECDALAPAKHFETIPSEYVDYHFSKKVAVQPQWMVLTDPELGNQTCRIQFEVPNHIKKSTYVYYRLTNFNQNYREYVQSLDLDQLKGKALIGNDLDPNCDPLRTVENKTIFPCGLIANSMFNDTFGTTLTGVNDTADYLLTTKGIAWDTDSHRYGKTEYNASDIVPPPNWAKLFPNGYTDDNIPDLQNWEQFKIWMRTAALPNFYKLAMKNETNGLGKGIYIADIELNYPVRSFYGTKSFVLTTNSIIGAGNEALGIVYLIVAGIATLFAILFLIKVIFKPRPMHDHSYLNFENSDTPFDESSVVSIPLREIL.

The Cytoplasmic segment spans residues 1-46 (MGLILRWKEKKQLSSKQNAQKSRKPANTSFRQQRLKAWQPILSPQS). A helical membrane pass occupies residues 47–67 (VLPLLILMACVFAPIGIGLVV). Residues 68-334 (STISVQRLVV…NSIIGAGNEA (267 aa)) lie on the Lumenal side of the membrane. Positions 70 to 332 (ISVQRLVVNY…TTNSIIGAGN (263 aa)) are confers specificity for binding DNF3. Asparagine 78, asparagine 123, asparagine 187, asparagine 202, asparagine 213, asparagine 240, and asparagine 291 each carry an N-linked (GlcNAc...) asparagine glycan. Intrachain disulfides connect cysteine 82–cysteine 126 and cysteine 179–cysteine 193. A helical membrane pass occupies residues 335 to 355 (LGIVYLIVAGIATLFAILFLI). Residues 356–393 (KVIFKPRPMHDHSYLNFENSDTPFDESSVVSIPLREIL) are Cytoplasmic-facing.

Belongs to the CDC50/LEM3 family. In terms of assembly, component of a flippase complex consisting of DNF3 and YNR048W/CRF1. Interacts with DNF3; the interaction is direct and required for proper expression and endoplasmic reticulum (ER) export of either partner.

The protein resides in the golgi apparatus. The protein localises to the trans-Golgi network membrane. Accessory component of a P4-ATPase flippase complex which catalyzes the hydrolysis of ATP coupled to the transport of phosphatidylcholine and small amounts of phosphatidylethanolamine from the lumen to the cytosolic leaflet of the trans-Golgi network and ensures the maintenance of asymmetric distribution of phospholipids. May be involved in transport from early endosomes to the trans-Golgi network (TGN). The chain is Phospholipid-transporting ATPase accessory subunit CRF1 from Saccharomyces cerevisiae (strain ATCC 204508 / S288c) (Baker's yeast).